The primary structure comprises 563 residues: O-fucosyltransferase 14 (563 aa).

Low complexity predominate over residues 1–16 (MVKVSSSTTSSSSSSS). The segment at 1-25 (MVKVSSSTTSSSSSSSPDEESDLQN) is disordered. The helical; Signal-anchor for type II membrane protein transmembrane segment at 73 to 93 (IFIFLPIVIILIYLSTDFSNY) threads the bilayer. 3 N-linked (GlcNAc...) asparagine glycosylation sites follow: Asn135, Asn140, and Asn339. Substrate-binding positions include 412–414 (HFR) and 528–529 (TF).

It belongs to the glycosyltransferase GT106 family.

It localises to the membrane. It participates in glycan metabolism. The chain is O-fucosyltransferase 14 from Arabidopsis thaliana (Mouse-ear cress).